The primary structure comprises 860 residues: Anoctamin-7 (860 aa).

At 1-297 (MLRKQAGEED…YFAWLGFYTG (297 aa)) the chain is on the cytoplasmic side. The disordered stretch occupies residues 24-50 (NGCSYGSTAQASEAGKQQVAPSRVGSS). Residues 298–318 (WLLPAAVVGTVVFLAGCFLVF) traverse the membrane as a helical segment. Residues 319–362 (SDVPTQELCHSSDTFDMCPLCSDCSFWLLSSACTLAQAGRLFDH) are Extracellular-facing. Residues 363–383 (GGTVFFSLFMALWAVLLLEYW) traverse the membrane as a helical segment. Topologically, residues 384-441 (KRKNATLAYRWDCSDYEDIEERPRPQFAATAPMTALNPITGEDEPYFPEKNRVRRMLA) are cytoplasmic. A helical membrane pass occupies residues 442–462 (GSVVLLMMVAVVIMCLVSIIL). The Extracellular segment spans residues 463-492 (YRAVMAIIVSKSNNAFLSAWASRIASLTGS). A helical membrane pass occupies residues 493–513 (VVNLVFILILSKVYVILAQVL). Residues 514 to 530 (TRWEMHRTQTAFEDAFT) lie on the Cytoplasmic side of the membrane. Residues 531-551 (LKVFIFQFVNFYASPVYIAFF) traverse the membrane as a helical segment. Topologically, residues 552 to 652 (KGRFVGYPGN…FHEYLEMVLQ (101 aa)) are extracellular. The helical transmembrane segment at 653–673 (FGFVTIFVAACPLAPLFALLN) threads the bilayer. The Cytoplasmic segment spans residues 674-701 (NWVEIRLDARKFVCEYRRPVAERAQDIG). The helical transmembrane segment at 702-722 (IWFHILAGLTHLAVISNAFLL) threads the bilayer. Topologically, residues 723-779 (AFSSDFLPRVYYSWTRAPDLRGFLNFTLARAPPTFTSAHNRTCRYRAFRDDDGHYSP) are extracellular. Residues N747 and N762 are each glycosylated (N-linked (GlcNAc...) asparagine). Residues 780–800 (TYWTLLAIRLAFVIVFEHVVF) form a helical membrane-spanning segment. Residues 801-860 (STGRFLDLLVPDIPESVEIKVKREYYLAKQALADNEALLGATGVKGEQPPSSEPSLGLPA) lie on the Cytoplasmic side of the membrane.

Belongs to the anoctamin family.

The protein resides in the cell membrane. Its subcellular location is the endoplasmic reticulum. It carries out the reaction a 1,2-diacyl-sn-glycero-3-phospho-L-serine(in) = a 1,2-diacyl-sn-glycero-3-phospho-L-serine(out). The catalysed reaction is a beta-D-galactosyl-(1&lt;-&gt;1')-N-acylsphing-4-enine(out) = a beta-D-galactosyl-(1&lt;-&gt;1')-N-acylsphing-4-enine(in). The enzyme catalyses a 1,2-diacyl-sn-glycero-3-phosphocholine(in) = a 1,2-diacyl-sn-glycero-3-phosphocholine(out). Its function is as follows. Has calcium-dependent phospholipid scramblase activity; scrambles phosphatidylserine, phosphatidylcholine and galactosylceramide. Does not exhibit calcium-activated chloride channel (CaCC) activity. May play a role in cell-cell interactions. The protein is Anoctamin-7 (Ano7) of Rattus norvegicus (Rat).